A 345-amino-acid polypeptide reads, in one-letter code: uncharacterized protein (345 aa).

Residue Met1 is a domain, TBDR plug. Residues 1–345 form the TBDR beta-barrel domain; sequence MDLGPIYNTR…EVILNTKIEF (345 aa). Positions 328–345 match the TonB C-terminal box motif; it reads PVALGYAREVILNTKIEF.

Belongs to the TonB-dependent receptor family.

The protein localises to the cell outer membrane. This is an uncharacterized protein from Haemophilus influenzae (strain ATCC 51907 / DSM 11121 / KW20 / Rd).